Consider the following 344-residue polypeptide: Meiotic recombination protein DMC1 homolog A (344 aa).

Gly-133–Thr-140 contributes to the ATP binding site. Arg-235 is a binding site for dsDNA. SsDNA-binding residues include Arg-235, Phe-238, Arg-241, Arg-247, and Arg-315. DsDNA is bound by residues Arg-241 and Arg-247.

This sequence belongs to the RecA family. DMC1 subfamily. In terms of tissue distribution, expressed in pollen mother cells and root tips.

Its subcellular location is the nucleus. Recombinase that may participate in meiotic recombination, specifically in homologous strand assimilation, which is required for the resolution of meiotic double-strand breaks. Exhibits DNA-dependent ATPase activity when bound to single-stranded DNA (ssDNA). Mediates renaturation of homologous complementary strands as well as assimilation of single strands into homologous supercoiled duplexes leading to D-loop formation. Binds circular single-stranded DNA (ssDNA) and circular double-stranded DNA (dsDNA) in vitro. Catalyzes DNA homologous renaturation and DNA strand exchange. The rates of these activities are dependent on the state of ATP hydrolysis. Forms helical filaments along ssDNA and dsDNA, and promotes strand exchange between ssDNA and dsDNA with long DNA substrates of several thousand base pairs. The presence of the replication protein A is not required for this activity. Seems to be required for homologous pairing and subsequent chromosome segregation during male meiosis. May be not directly required for homologous pairing during male meiosis. Required for synaptonemal complex assembly and crossover formation. Functions redundantly with DMC1B. In Oryza sativa subsp. indica (Rice), this protein is Meiotic recombination protein DMC1 homolog A.